A 622-amino-acid polypeptide reads, in one-letter code: Low affinity potassium transport system protein Kup (622 aa).

12 helical membrane-spanning segments follow: residues 9-29 (LPAITLAAIGVVYGDIGTSPL), 49-69 (VFGFLSLIFWLLIFVVSIKYL), 103-123 (VIMGLIGGSFFYGEVVITPAI), 137-157 (PQLDTWIVPLSIIVLTLLFMI), 165-185 (VGQLFAPIMLTWFLILAGLGL), 213-233 (VSFIALGAVVLSITGVEALYA), 247-267 (WFTVVLPSLTLNYFGQGALLL), 276-296 (PFFLLAPDWALIPLLIIAALA), 337-357 (IYIPFVNWMLYVAVVIVIVSF), 363-383 (LAAAYGIAVTGTMVLTSILST), 396-416 (FVALILIAFLCVDIPLFTANL), and 419-439 (LLSGGWLPLSLGTVMFIVMTT).

The protein belongs to the HAK/KUP transporter (TC 2.A.72) family.

The protein localises to the cell inner membrane. It catalyses the reaction K(+)(in) + H(+)(in) = K(+)(out) + H(+)(out). Functionally, responsible for the low-affinity transport of potassium into the cell. Likely operates as a K(+):H(+) symporter. The chain is Low affinity potassium transport system protein Kup from Escherichia coli O6:K15:H31 (strain 536 / UPEC).